A 78-amino-acid polypeptide reads, in one-letter code: Mitochondrial import inner membrane translocase subunit Tim9 (78 aa).

The Twin CX3C motif signature appears at 24-48 (CFTSCVNEFGSRTVNAKEESCANNC). Disulfide bonds link cysteine 24–cysteine 48 and cysteine 28–cysteine 44.

This sequence belongs to the small Tim family. In terms of assembly, heterohexamer; composed of 3 copies of tim-9/tin-9.1 and 3 copies of tim-10/tin-10, named soluble 70 kDa complex. The complex associates with the tim-22 component of the TIM22 complex. Interacts with multi-pass transmembrane proteins in transit.

Its subcellular location is the mitochondrion inner membrane. In terms of biological role, mitochondrial intermembrane chaperone that participates in the import and insertion of multi-pass transmembrane proteins into the mitochondrial inner membrane. May also be required for the transfer of beta-barrel precursors from the TOM complex to the sorting and assembly machinery (SAM complex) of the outer membrane. Acts as a chaperone-like protein that protects the hydrophobic precursors from aggregation and guide them through the mitochondrial intermembrane space. The sequence is that of Mitochondrial import inner membrane translocase subunit Tim9 (tin-9.1) from Caenorhabditis briggsae.